Consider the following 173-residue polypeptide: Nucleoside-triphosphatase THEP1 (173 aa).

Residues glycine 9 to threonine 16 and leucine 97 to glycine 104 each bind ATP.

This sequence belongs to the THEP1 NTPase family.

It carries out the reaction a ribonucleoside 5'-triphosphate + H2O = a ribonucleoside 5'-diphosphate + phosphate + H(+). Its function is as follows. Has nucleotide phosphatase activity towards ATP, GTP, CTP, TTP and UTP. May hydrolyze nucleoside diphosphates with lower efficiency. This chain is Nucleoside-triphosphatase THEP1, found in Caldivirga maquilingensis (strain ATCC 700844 / DSM 13496 / JCM 10307 / IC-167).